Consider the following 421-residue polypeptide: Histidine--tRNA ligase (421 aa).

Belongs to the class-II aminoacyl-tRNA synthetase family. In terms of assembly, homodimer.

It is found in the cytoplasm. It catalyses the reaction tRNA(His) + L-histidine + ATP = L-histidyl-tRNA(His) + AMP + diphosphate + H(+). The protein is Histidine--tRNA ligase of Natranaerobius thermophilus (strain ATCC BAA-1301 / DSM 18059 / JW/NM-WN-LF).